Reading from the N-terminus, the 185-residue chain is ATP-dependent protease subunit HslV (185 aa).

Threonine 12 is an active-site residue. Na(+) is bound by residues alanine 168, cysteine 171, and threonine 174.

This sequence belongs to the peptidase T1B family. HslV subfamily. As to quaternary structure, a double ring-shaped homohexamer of HslV is capped on each side by a ring-shaped HslU homohexamer. The assembly of the HslU/HslV complex is dependent on binding of ATP.

The protein resides in the cytoplasm. The enzyme catalyses ATP-dependent cleavage of peptide bonds with broad specificity.. Allosterically activated by HslU binding. Protease subunit of a proteasome-like degradation complex believed to be a general protein degrading machinery. In Ruegeria pomeroyi (strain ATCC 700808 / DSM 15171 / DSS-3) (Silicibacter pomeroyi), this protein is ATP-dependent protease subunit HslV.